The chain runs to 155 residues: MSRRGTAEEKTAKSDPIYRNRLVNMLVNRILKHGKKSLAYQIIYRAMKKIQQKTETNPLSVLRQAIRGVTPDIAVKARRVGGSTHQVPIEIGSTQGKALAIRWLLGASRKRPGRNMVFKLSSELVDAAKGSGDAIRKKEETHRMAEANRAFAHFR.

It belongs to the universal ribosomal protein uS7 family. Part of the 30S ribosomal subunit.

It is found in the plastid. The protein resides in the chloroplast. In terms of biological role, one of the primary rRNA binding proteins, it binds directly to 16S rRNA where it nucleates assembly of the head domain of the 30S subunit. The protein is Small ribosomal subunit protein uS7cz/uS7cy (rps7-A) of Morus indica (Mulberry).